The following is a 199-amino-acid chain: uncharacterized protein (199 aa).

The protein resides in the mitochondrion. This is an uncharacterized protein from Schizosaccharomyces pombe (strain 972 / ATCC 24843) (Fission yeast).